Here is an 819-residue protein sequence, read N- to C-terminus: Serine/threonine-protein phosphatase 1 regulatory subunit 10 (819 aa).

Residues Lys73–Gln147 enclose the TFIIS N-terminal domain. Disordered regions lie at residues Gln151–Ser204, Lys296–Val391, and Ser495–Met785. 2 stretches are compositionally biased toward basic and acidic residues: residues Ala153–Lys165 and Lys173–Lys190. Positions Ser305–Lys327 are enriched in polar residues. The PP1-binding motif signature appears at Lys386 to Val415. Residues Ser495–Asp504 show a composition bias toward basic and acidic residues. 2 stretches are compositionally biased toward polar residues: residues Met533 to Asp543 and Met560 to Leu578. The span at Lys589 to Lys604 shows a compositional bias: basic and acidic residues. A compositionally biased stretch (low complexity) spans Leu606–Gly618. Composition is skewed to pro residues over residues Phe635–Asn663 and His670–Asn695. Basic and acidic residues-rich tracts occupy residues His704 to Asp715 and His758 to Arg777. The segment at Met785 to Ile813 adopts a C3H1-type zinc-finger fold.

In terms of assembly, component of the PNUTS-PP1 complex (also named PTW/PP1 complex).

Its subcellular location is the nucleus. The protein localises to the chromosome. In terms of biological role, substrate-recognition component of the PNUTS-PP1 protein phosphatase complex, a protein phosphatase 1 (PP1) complex that promotes RNA polymerase II transcription pause-release, allowing transcription elongation. Promoter-proximal pausing by RNA polymerase II is a transcription halt following transcription initiation but prior to elongation, which acts as a checkpoint to control that transcripts are favorably configured for transcriptional elongation. The PNUTS-PP1 complex mediates the release of RNA polymerase II from promoter-proximal region of genes by catalyzing dephosphorylation of proteins involved in transcription. In some context, PPP1R10/PNUTS also acts as an inhibitor of protein phosphatase 1 (PP1) activity by preventing access to substrates. This Xenopus laevis (African clawed frog) protein is Serine/threonine-protein phosphatase 1 regulatory subunit 10 (ppp1r10).